The sequence spans 279 residues: Phosphatidylglycerol--prolipoprotein diacylglyceryl transferase (279 aa).

A run of 7 helical transmembrane segments spans residues 14–34 (IAFS…ACAI), 62–82 (YFLW…ILIY), 106–126 (FVGI…IASY), 136–156 (LLIY…FGRI), 190–210 (PSQL…VMWA), 218–238 (GLLI…AEFY), and 252–272 (LSMG…ILLY). Residue Arg-155 coordinates a 1,2-diacyl-sn-glycero-3-phospho-(1'-sn-glycerol).

It belongs to the Lgt family.

It is found in the cell inner membrane. It catalyses the reaction L-cysteinyl-[prolipoprotein] + a 1,2-diacyl-sn-glycero-3-phospho-(1'-sn-glycerol) = an S-1,2-diacyl-sn-glyceryl-L-cysteinyl-[prolipoprotein] + sn-glycerol 1-phosphate + H(+). It functions in the pathway protein modification; lipoprotein biosynthesis (diacylglyceryl transfer). Functionally, catalyzes the transfer of the diacylglyceryl group from phosphatidylglycerol to the sulfhydryl group of the N-terminal cysteine of a prolipoprotein, the first step in the formation of mature lipoproteins. In Helicobacter pylori (strain HPAG1), this protein is Phosphatidylglycerol--prolipoprotein diacylglyceryl transferase.